A 119-amino-acid chain; its full sequence is Protein TusC (119 aa).

The protein belongs to the DsrF/TusC family. In terms of assembly, heterohexamer, formed by a dimer of trimers. The hexameric TusBCD complex contains 2 copies each of TusB, TusC and TusD. The TusBCD complex interacts with TusE.

The protein resides in the cytoplasm. Functionally, part of a sulfur-relay system required for 2-thiolation of 5-methylaminomethyl-2-thiouridine (mnm(5)s(2)U) at tRNA wobble positions. The polypeptide is Protein TusC (Escherichia fergusonii (strain ATCC 35469 / DSM 13698 / CCUG 18766 / IAM 14443 / JCM 21226 / LMG 7866 / NBRC 102419 / NCTC 12128 / CDC 0568-73)).